The following is a 456-amino-acid chain: Kynurenine 3-monooxygenase (456 aa).

It belongs to the aromatic-ring hydroxylase family. KMO subfamily. The cofactor is FAD.

The enzyme catalyses L-kynurenine + NADPH + O2 + H(+) = 3-hydroxy-L-kynurenine + NADP(+) + H2O. The protein operates within cofactor biosynthesis; NAD(+) biosynthesis; quinolinate from L-kynurenine: step 1/3. In terms of biological role, catalyzes the hydroxylation of L-kynurenine (L-Kyn) to form 3-hydroxy-L-kynurenine (L-3OHKyn). Required for synthesis of quinolinic acid. This is Kynurenine 3-monooxygenase from Xanthomonas campestris pv. campestris (strain B100).